A 950-amino-acid polypeptide reads, in one-letter code: Protocadherin alpha-6 (950 aa).

The first 29 residues, 1-29 (MVFTPEDRLGKQCLLLPLLLLAAWKVGSG), serve as a signal peptide directing secretion. The Extracellular segment spans residues 30–697 (QLHYSVPEEA…GPEAALVDVN (668 aa)). 6 Cadherin domains span residues 34–133 (SVPE…PPLF), 157–242 (ASDA…APTF), 243–350 (EQSE…VPEI), 351–455 (ALTS…APAF), 456–565 (AQPE…APAL), and 581–678 (VPRS…APKA). 4 N-linked (GlcNAc...) asparagine glycosylation sites follow: Asn-257, Asn-265, Asn-386, and Asn-548. Residues 698 to 718 (VYLIIAICAVSSLLVLTLLLY) traverse the membrane as a helical segment. Residues 719–950 (TALRCSAPPT…GNSTTDNSDQ (232 aa)) lie on the Cytoplasmic side of the membrane. PXXP repeat units lie at residues 799–802 (PRQP), 832–835 (PGGP), 873–876 (PGNP), and 891–894 (PGSP). Residues 799–894 (PRQPNPDWRY…PDKFIIPGSP (96 aa)) form a 4 X 4 AA repeats of P-X-X-P region. The interval 830–950 (AGPGGPDQQW…GNSTTDNSDQ (121 aa)) is disordered. The span at 909–923 (DKSDFITFGKKEETK) shows a compositional bias: basic and acidic residues.

It is found in the cell membrane. The protein localises to the secreted. In terms of biological role, potential calcium-dependent cell-adhesion protein. May be involved in the establishment and maintenance of specific neuronal connections in the brain. The protein is Protocadherin alpha-6 (PCDHA6) of Homo sapiens (Human).